The following is a 345-amino-acid chain: MDENNGGSSSLPPFLTKTYEMVDDSSSDSVVAWSENNKSFIVKNPAEFSRDLLPRFFKHKNFSSFIRQLNTYGFRKVDPEKWEFLNDDFVRGRPYLMKNIHRRKPVHSHSLVNLQAQNPLTESERRSMEDQIERLKNEKEGLLAELQNQEQERKEFELQVTTLKDRLQHMEQHQKSIVAYVSQVLGKPGLSLNLENHERRKRRFQENSLPPSSSHIEQVEKLESSLTFWENLVSESCEKSGLQSSSMDHDAAESSLSIGDTRPKSSKIDMNSEPPVTVTAPAPKTGVNDDFWEQCLTENPGSTEQQEVQSERRDVGNDNNGNKIGNQRTYWWNSGNVNNITEKAS.

The DNA-binding element occupies 11–105 (LPPFLTKTYE…LMKNIHRRKP (95 aa)). A hydrophobic repeat HR-A/B region spans residues 119–185 (PLTESERRSM…SIVAYVSQVL (67 aa)). The Nuclear localization signal signature appears at 199-203 (RRKRR). An AHA1 motif is present at residues 226-235 (LTFWENLVSE). The tract at residues 240–329 (SGLQSSSMDH…NGNKIGNQRT (90 aa)) is disordered. The segment covering 274-283 (PPVTVTAPAP) has biased composition (low complexity). The AHA2 signature appears at 289 to 298 (DDFWEQCLTE). Composition is skewed to polar residues over residues 296–308 (LTEN…QQEV) and 317–329 (NDNN…NQRT).

The protein belongs to the HSF family. Class A subfamily. As to quaternary structure, homotrimer. In terms of processing, exhibits temperature-dependent phosphorylation. In terms of tissue distribution, expressed in roots, seedlings and at lower levels in leaves.

It localises to the nucleus. Functionally, transcriptional activator that specifically binds DNA sequence 5'-AGAAnnTTCT-3' known as heat shock promoter elements (HSE). May be involved in general response to auxin. The polypeptide is Heat stress transcription factor A-4c (HSFA4C) (Arabidopsis thaliana (Mouse-ear cress)).